A 141-amino-acid polypeptide reads, in one-letter code: Hemoglobin subunit alpha (141 aa).

The region spanning 1–141 (VLSAADKTAI…VATALGSHYR (141 aa)) is the Globin domain. Histidine 59 lines the O2 pocket. Histidine 88 provides a ligand contact to heme b.

This sequence belongs to the globin family. Heterotetramer of two alpha chains and two beta chains. As to expression, red blood cells.

Its function is as follows. Involved in oxygen transport from the lung to the various peripheral tissues. The sequence is that of Hemoglobin subunit alpha (HBA) from Squalus acanthias (Spiny dogfish).